A 138-amino-acid polypeptide reads, in one-letter code: Large ribosomal subunit protein uL16 (138 aa).

Over residues 1 to 13 the composition is skewed to basic residues; it reads MLQPARRKFRKEQ. The interval 1-22 is disordered; the sequence is MLQPARRKFRKEQKGRNTGLAT.

Belongs to the universal ribosomal protein uL16 family. Part of the 50S ribosomal subunit.

Binds 23S rRNA and is also seen to make contacts with the A and possibly P site tRNAs. The polypeptide is Large ribosomal subunit protein uL16 (Thiobacillus denitrificans (strain ATCC 25259 / T1)).